A 599-amino-acid chain; its full sequence is MFS-type transporter ucsM (599 aa).

Over residues 23–34 (AHHHGKEREAHR) the composition is skewed to basic and acidic residues. The segment at 23–42 (AHHHGKEREAHRQSLSSVPG) is disordered. The next 8 membrane-spanning stretches (helical) occupy residues 147–167 (VALG…GAWL), 178–198 (ILIG…GAVP), 204–224 (GKGT…AGLF), 263–283 (IMLI…ATVY), 291–311 (WLAF…LWYL), 386–406 (IFLY…ILPS), 424–444 (FNPI…YPAL), and 454–474 (ISRI…SSLV). N-linked (GlcNAc...) asparagine glycosylation occurs at N517. Transmembrane regions (helical) follow at residues 539–559 (LFLF…PAIV) and 563–583 (LVWV…IFWV).

Belongs to the major facilitator superfamily. Proton-dependent oligopeptide transporter (POT/PTR) (TC 2.A.17) family.

Its subcellular location is the membrane. MFS-type transporter; part of the gene cluster that mediates the biosynthesis of UCS1025A, a member of the pyrrolizidinone family that acts as a strong telomerase inhibitor and displays potent antibacterial and antitumor properties. These compounds share a hemiaminal-containing pyrrolizidinone core fused with a gamma-lactone, giving a furopyrrolizidine that is connected to a decalin fragment. This is MFS-type transporter ucsM from Acremonium sp.